A 141-amino-acid polypeptide reads, in one-letter code: Large ribosomal subunit protein uL11 (141 aa).

This sequence belongs to the universal ribosomal protein uL11 family. As to quaternary structure, part of the ribosomal stalk of the 50S ribosomal subunit. Interacts with L10 and the large rRNA to form the base of the stalk. L10 forms an elongated spine to which L12 dimers bind in a sequential fashion forming a multimeric L10(L12)X complex. In terms of processing, one or more lysine residues are methylated.

Forms part of the ribosomal stalk which helps the ribosome interact with GTP-bound translation factors. The chain is Large ribosomal subunit protein uL11 from Chlorobium phaeovibrioides (strain DSM 265 / 1930) (Prosthecochloris vibrioformis (strain DSM 265)).